The chain runs to 87 residues: Large ribosomal subunit protein eL33 (87 aa).

Belongs to the eukaryotic ribosomal protein eL33 family.

The chain is Large ribosomal subunit protein eL33 from Pyrococcus abyssi (strain GE5 / Orsay).